The chain runs to 148 residues: Deoxyuridine 5'-triphosphate nucleotidohydrolase (148 aa).

Substrate-binding positions include 68–70, N81, 85–87, and K95; these read RSG and TID.

This sequence belongs to the dUTPase family. It depends on Mg(2+) as a cofactor.

It carries out the reaction dUTP + H2O = dUMP + diphosphate + H(+). The protein operates within pyrimidine metabolism; dUMP biosynthesis; dUMP from dCTP (dUTP route): step 2/2. In terms of biological role, this enzyme is involved in nucleotide metabolism: it produces dUMP, the immediate precursor of thymidine nucleotides and it decreases the intracellular concentration of dUTP so that uracil cannot be incorporated into DNA. The polypeptide is Deoxyuridine 5'-triphosphate nucleotidohydrolase (Rickettsia akari (strain Hartford)).